Consider the following 415-residue polypeptide: Membrane-bound ghrelin O-acyltransferase mboat4 (415 aa).

Residues Met1–Trp6 are Lumenal-facing. A helical transmembrane segment spans residues Ile7–Phe28. At His29–Arg42 the chain is on the cytoplasmic side. The helical transmembrane segment at Tyr43–Met58 threads the bilayer. The Lumenal segment spans residues Gly59–Tyr61. The helical transmembrane segment at Ser62 to Tyr78 threads the bilayer. At Ile79–Leu84 the chain is on the cytoplasmic side. The chain crosses the membrane as a helical span at residues His85–Val103. Over Gln104 to Ile122 the chain is Lumenal. The chain crosses the membrane as a helical span at residues Ser123–Asp138. Over Phe139 to Thr193 the chain is Cytoplasmic. Residues Ser194–Lys214 form a helical membrane-spanning segment. At Ser215–Val227 the chain is on the lumenal side. Residues Leu228–Met247 form a helical membrane-spanning segment. Over Ser248–Arg312 the chain is Cytoplasmic. Residues Asn295 and His326 contribute to the active site. A helical transmembrane segment spans residues Ser313–His326. Over Gly327 to Leu328 the chain is Lumenal. Residues His329–Ala345 traverse the membrane as a helical segment. The Cytoplasmic segment spans residues Asp346 to Arg364. Residues Leu365–Val385 form a helical membrane-spanning segment. Residues Glu386–Lys394 lie on the Lumenal side of the membrane. Residues Leu395–Leu415 form a helical membrane-spanning segment.

It belongs to the membrane-bound acyltransferase family. Monomer. In terms of processing, not glycosylated.

The protein resides in the endoplasmic reticulum membrane. It catalyses the reaction octanoyl-CoA + L-seryl-[protein] = O-octanoyl-L-seryl-[protein] + CoA. The catalysed reaction is decanoyl-CoA + L-seryl-[protein] = O-decanoyl-L-seryl-[protein] + CoA. It carries out the reaction L-seryl-[protein] + acetyl-CoA = O-acetyl-L-seryl-[protein] + CoA. The enzyme catalyses L-seryl-[protein] + butanoyl-CoA = O-butanoyl-L-seryl-[protein] + CoA. It catalyses the reaction pentanoyl-CoA + L-seryl-[protein] = O-pentanoyl-L-seryl-[protein] + CoA. The catalysed reaction is hexanoyl-CoA + L-seryl-[protein] = O-hexanoyl-L-seryl-[protein] + CoA. It carries out the reaction heptanoyl-CoA + L-seryl-[protein] = O-heptanoyl-L-seryl-[protein] + CoA. The enzyme catalyses nonanoyl-CoA + L-seryl-[protein] = O-nonanoyl-L-seryl-[protein] + CoA. It catalyses the reaction L-seryl-[protein] + dodecanoyl-CoA = O-dodecanoyl-L-seryl-[protein] + CoA. The catalysed reaction is L-seryl-[protein] + tetradecanoyl-CoA = O-tetradecanoyl-L-seryl-[protein] + CoA. It carries out the reaction a fatty acyl-CoA + L-seryl-[protein] = O-fatty acyl-L-seryl-[protein] + CoA. Functionally, catalyzes ghrelin acylation at 'Ser-3' using preferentially octanoyl-CoA, hexanoyl-CoA and decanoyl-CoA as acyl-CoA donors leading to ghrelin activity. In vitro uses also acyl-CoA donors of different lengths from short-chain (C2) to long-chain fatty acids (C16) knowing that acyl-CoA donors from butanoyl-CoA (C4) to dodecanoyl-CoA (C12) are more efficient compared to longer acyl-CoA donors, such as myristoyl-CoA (C14) and palmitoyl-CoA (C16) that are not efficient. This is Membrane-bound ghrelin O-acyltransferase mboat4 from Danio rerio (Zebrafish).